An 817-amino-acid chain; its full sequence is Ribonuclease R 1 (817 aa).

In terms of domain architecture, RNB spans 259-584; sequence RVDYRNEITF…DLLVHRLIRE (326 aa). The S1 motif domain maps to 637 to 717; it reads GEEYEGIIAS…MTGEIDFEYL (81 aa). The tract at residues 728 to 817 is disordered; that stretch reads AKAKKKPDHK…DGRKKPHKRG (90 aa). A compositionally biased stretch (basic residues) spans 729-742; it reads KAKKKPDHKGRKKS. Basic and acidic residues-rich tracts occupy residues 767–777 and 795–810; these read RRADEKFEFDK and KFTDKKDNGKKFTDGR.

This sequence belongs to the RNR ribonuclease family. RNase R subfamily.

Its subcellular location is the cytoplasm. The enzyme catalyses Exonucleolytic cleavage in the 3'- to 5'-direction to yield nucleoside 5'-phosphates.. 3'-5' exoribonuclease that releases 5'-nucleoside monophosphates and is involved in maturation of structured RNAs. The sequence is that of Ribonuclease R 1 (rnr1) from Lactococcus lactis subsp. lactis (strain IL1403) (Streptococcus lactis).